The following is a 156-amino-acid chain: Small ribosomal subunit protein uS7c (156 aa).

This sequence belongs to the universal ribosomal protein uS7 family. Part of the 30S ribosomal subunit.

It localises to the plastid. Its subcellular location is the chloroplast. In terms of biological role, one of the primary rRNA binding proteins, it binds directly to 16S rRNA where it nucleates assembly of the head domain of the 30S subunit. The protein is Small ribosomal subunit protein uS7c (rps7) of Euglena gracilis.